We begin with the raw amino-acid sequence, 184 residues long: ATP-dependent protease subunit HslV (184 aa).

T12 is a catalytic residue. Residues A167, C170, and T173 each coordinate Na(+).

This sequence belongs to the peptidase T1B family. HslV subfamily. As to quaternary structure, a double ring-shaped homohexamer of HslV is capped on each side by a ring-shaped HslU homohexamer. The assembly of the HslU/HslV complex is dependent on binding of ATP.

The protein resides in the cytoplasm. It catalyses the reaction ATP-dependent cleavage of peptide bonds with broad specificity.. Allosterically activated by HslU binding. Its function is as follows. Protease subunit of a proteasome-like degradation complex believed to be a general protein degrading machinery. The protein is ATP-dependent protease subunit HslV of Wolbachia pipientis subsp. Culex pipiens (strain wPip).